Reading from the N-terminus, the 441-residue chain is MEISSHQSHLLQQLNEQRRQDVFCDCSILVEGKVFKAHRNVLFASSGYFKMLLSQNSKETSQPTTATFQAFSPDTFTVILDFVYSGKLSLTGQNVIEVMSAASFLQMTDVISVCKTFIKSSLDISEKEKDRYFSLSDKDANSNGVERSSFYSGGWQEGSSSPRSHLSPEQGTGIISGKSWNKYNYHPASQKNTQQPLAKHEPRKESIKKTKHLRLSQPSEVTHYKSSKREVRTSDSSSHVSQSEEQAQIDAEMDSTPVGYQYGQGSDVTSKSFPDDLPRMRFKCPYCTHVVKRKADLKRHLRCHTGERPYPCQACGKRFSRLDHLSSHFRTIHQACKLICRKCKRHVTDLTGQVVQEGTRRYRLCNECLAEFGIDSLPIDLEAEQHLMSPSDGDKDSRWHLSEDENRSYVEIVEDGSADLVIQQVDDSEEEEEKEIKPNIR.

Residues Cys-24–Gly-92 enclose the BTB domain. Polar residues-rich tracts occupy residues Asn-143 to Gln-170 and Lys-178 to Pro-196. The segment at Asn-143–Ala-251 is disordered. 2 positions are modified to phosphoserine: Ser-161 and Ser-167. Residues Lys-178, Lys-182, Lys-191, and Lys-199 each participate in a glycyl lysine isopeptide (Lys-Gly) (interchain with G-Cter in SUMO2) cross-link. Residues Ala-198 to Lys-208 show a composition bias toward basic and acidic residues. The span at Ser-234 to Ser-243 shows a compositional bias: low complexity. 2 consecutive C2H2-type zinc fingers follow at residues Phe-282 to His-304 and Tyr-310 to His-333. Lys-437 is covalently cross-linked (Glycyl lysine isopeptide (Lys-Gly) (interchain with G-Cter in SUMO2)).

The protein localises to the nucleus. May be involved in transcriptional regulation. The sequence is that of Zinc finger and BTB domain-containing protein 8A (ZBTB8A) from Homo sapiens (Human).